A 258-amino-acid chain; its full sequence is Thiamine thiazole synthase (258 aa).

Residues Ser36, 55–56, Gly63, Val127, and 153–155 each bind NAD(+); these read ER and HVD. Fe cation-binding residues include Asp155 and His170. Met224 lines the NAD(+) pocket. Arg234 is a binding site for glycine.

This sequence belongs to the THI4 family. In terms of assembly, homooctamer; tetramer of dimers. Fe(2+) is required as a cofactor.

It catalyses the reaction hydrogen sulfide + glycine + NAD(+) = ADP-5-ethyl-4-methylthiazole-2-carboxylate + nicotinamide + 3 H2O + H(+). Its pathway is cofactor biosynthesis; thiamine diphosphate biosynthesis. Functionally, involved in the biosynthesis of the thiazole moiety of thiamine. Catalyzes the conversion of NAD and glycine to adenosine diphosphate 5-(2-hydroxyethyl)-4-methylthiazole-2-carboxylate (ADT), an adenylated thiazole intermediate, using free sulfide as a source of sulfur. The protein is Thiamine thiazole synthase of Desulfosudis oleivorans (strain DSM 6200 / JCM 39069 / Hxd3) (Desulfococcus oleovorans).